The primary structure comprises 219 residues: Transcriptional regulatory protein QseB (219 aa).

In terms of domain architecture, Response regulatory spans arginine 2–methionine 116. Aspartate 51 is subject to 4-aspartylphosphate. Residues serine 124 to glutamate 218 constitute a DNA-binding region (ompR/PhoB-type).

In terms of processing, phosphorylated by QseC.

It is found in the cytoplasm. Functionally, member of a two-component regulatory system QseB/QseC. Activates the flagella regulon by activating transcription of FlhDC. Currently it is not known whether this effect is direct or not. The polypeptide is Transcriptional regulatory protein QseB (qseB) (Escherichia coli O157:H7).